A 152-amino-acid chain; its full sequence is Globin, minor (152 aa).

In terms of domain architecture, Globin spans 12–152 (VNNSYHKDLL…ALIAVVQAAL (141 aa)). His-104 contributes to the heme b binding site.

It belongs to the globin family.

In Anadara trapezia (Sydney cockle), this protein is Globin, minor.